We begin with the raw amino-acid sequence, 221 residues long: MAAPVCVNIQMLLEAAEYLERREREAEHGYASMLPYNSKERDGLKRKSKSKKSSNSRSTHNEMEKNRRAHLRLCLEKLKILVPLGPESNRHTTLSLLTRAKSHIKKLEDCDKRSLHQIEQLQREQRHLKRQLEKFGVERTRMDSIGSAMSSERSDSDREEIDVDVESTDYLTADLDWSSSSSSVSDLDERGSMQSICSDEGYSSSGLKRIELQDNPKITAL.

A Nuclear localization signal motif is present at residues 21–49 (RREREAEHGYASMLPYNSKERDGLKRKSK). 2 disordered regions span residues 28–67 (HGYASMLPYNSKERDGLKRKSKSKKSSNSRSTHNEMEKNR) and 176–202 (DWSSSSSSVSDLDERGSMQSICSDEGY). The bHLH domain occupies 55 to 107 (NSRSTHNEMEKNRRAHLRLCLEKLKILVPLGPESNRHTTLSLLTRAKSHIKKL). Residues 192 to 202 (SMQSICSDEGY) show a composition bias toward polar residues.

Efficient DNA binding requires dimerization with another bHLH protein. Binds DNA as a heterodimer with MAX.

The protein localises to the nucleus. Transcriptional repressor. MAD binds with MAX to form a sequence-specific DNA-binding protein complex which recognizes the core sequence 5'-CAC[GA]TG-3'. MAD thus antagonizes MYC transcriptional activity by competing for MAX. The protein is Max dimerization protein 1 (mxd1) of Xenopus tropicalis (Western clawed frog).